Here is a 953-residue protein sequence, read N- to C-terminus: Translation initiation factor IF-2 (953 aa).

Disordered regions lie at residues 51 to 242 (SKAS…QEAK) and 279 to 363 (TKLK…TERK). Composition is skewed to basic and acidic residues over residues 80 to 89 (TGSEHVEKTQ) and 98 to 111 (FKAE…EQAA). Residues 131-140 (QPNNHQTNEQ) are compositionally biased toward polar residues. A compositionally biased stretch (basic and acidic residues) spans 149 to 188 (SQGDTNDKRIERKASNVSPRHDNHQLVGDRNRSFAKENHK). The segment covering 191–207 (RFTNQKKQGRQEPQSKS) has biased composition (polar residues). The segment covering 229-242 (RQSETRFRAQQEAK) has biased composition (basic and acidic residues). A compositionally biased stretch (polar residues) spans 282–291 (KSSNISAKST). Residues 300–317 (ARPEKNRELTHHSQEGQK) are compositionally biased toward basic and acidic residues. Low complexity predominate over residues 322 to 338 (SWNSQNQVRNQKNSNWN). Residues 339–348 (KNKKTKKGKN) are compositionally biased toward basic residues. Positions 454-623 (ERAPVVTIMG…LLVAEVEELK (170 aa)) constitute a tr-type G domain. The tract at residues 463–470 (GHVDHGKT) is G1. 463–470 (GHVDHGKT) contacts GTP. Residues 488 to 492 (GITQH) form a G2 region. Residues 509–512 (DTPG) form a G3 region. GTP contacts are provided by residues 509 to 513 (DTPGH) and 563 to 566 (NKID). The tract at residues 563 to 566 (NKID) is G4. Residues 599 to 601 (SAK) are G5.

It belongs to the TRAFAC class translation factor GTPase superfamily. Classic translation factor GTPase family. IF-2 subfamily.

Its subcellular location is the cytoplasm. In terms of biological role, one of the essential components for the initiation of protein synthesis. Protects formylmethionyl-tRNA from spontaneous hydrolysis and promotes its binding to the 30S ribosomal subunits. Also involved in the hydrolysis of GTP during the formation of the 70S ribosomal complex. The sequence is that of Translation initiation factor IF-2 from Streptococcus pyogenes serotype M49 (strain NZ131).